The following is a 347-amino-acid chain: MTNAVQTHMPAARAKPKKAIQGEKLRGYDKVARIPIKIIPTVEAKKKPDWIRVKLSSPAEVARIKSTLREQKLYTVCEEAACPNLPQCFADGTATFMIMGDICTRRCPFCDVGHGRPNELDKDEPRHTAETIQGLGLKYAVITSVDRDDLKDGGAAHFVEVLNESRALSPNCLIEILVPDFRGRMDIALDLLTETAPDVFNHNIETVPRLYKAFRPGSDYQHSLDLLKIYKERRPDIATKCGFMVGLGETEEEIYKLLDDLKAHNVDMITVGQYLQPSKDHAPVDRYVHPDEFQRYMDYGKKIGFFNIWAGPMVRSSYFADRQYYGEDCPAPIRSKKALAAEGKLGC.

7 residues coordinate [4Fe-4S] cluster: Cys77, Cys82, Cys88, Cys103, Cys107, Cys110, and Ser317. Positions 89–306 (FADGTATFMI…MDYGKKIGFF (218 aa)) constitute a Radical SAM core domain.

Belongs to the radical SAM superfamily. Lipoyl synthase family. Requires [4Fe-4S] cluster as cofactor.

It localises to the cytoplasm. It carries out the reaction [[Fe-S] cluster scaffold protein carrying a second [4Fe-4S](2+) cluster] + N(6)-octanoyl-L-lysyl-[protein] + 2 oxidized [2Fe-2S]-[ferredoxin] + 2 S-adenosyl-L-methionine + 4 H(+) = [[Fe-S] cluster scaffold protein] + N(6)-[(R)-dihydrolipoyl]-L-lysyl-[protein] + 4 Fe(3+) + 2 hydrogen sulfide + 2 5'-deoxyadenosine + 2 L-methionine + 2 reduced [2Fe-2S]-[ferredoxin]. The protein operates within protein modification; protein lipoylation via endogenous pathway; protein N(6)-(lipoyl)lysine from octanoyl-[acyl-carrier-protein]: step 2/2. In terms of biological role, catalyzes the radical-mediated insertion of two sulfur atoms into the C-6 and C-8 positions of the octanoyl moiety bound to the lipoyl domains of lipoate-dependent enzymes, thereby converting the octanoylated domains into lipoylated derivatives. The polypeptide is Lipoyl synthase (Psychrobacter arcticus (strain DSM 17307 / VKM B-2377 / 273-4)).